Consider the following 285-residue polypeptide: (3S)-malyl-CoA thioesterase (285 aa).

Substrate contacts are provided by arginine 70 and glutamate 122. Mg(2+)-binding residues include glutamate 122 and aspartate 148.

This sequence belongs to the HpcH/HpaI aldolase family. As to quaternary structure, homodimer or homotrimer. Requires Mg(2+) as cofactor.

The catalysed reaction is (S)-malyl-CoA + H2O = (S)-malate + CoA + H(+). Its activity is regulated as follows. Reversibly inhibited by EDTA. Stimulated by the divalent cations Mg(2+) and Mn(2+). Catalyzes the hydrolysis of (3S)-malyl-CoA to (3S)-malate and free CoA. Inactive towards beta-methylmalyl-CoA and other CoA esters. The chain is (3S)-malyl-CoA thioesterase from Cereibacter sphaeroides (strain ATCC 17023 / DSM 158 / JCM 6121 / CCUG 31486 / LMG 2827 / NBRC 12203 / NCIMB 8253 / ATH 2.4.1.) (Rhodobacter sphaeroides).